The sequence spans 399 residues: Putative endoplasmin-like protein (399 aa).

Lysine 130 participates in a covalent cross-link: Glycyl lysine isopeptide (Lys-Gly) (interchain with G-Cter in SUMO2). Positions 350-399 (LDLAVVEEPDEEPEETAEDKEQDKDKEMDVGTDEEKQETAKESTAEKDEL) are disordered. The segment covering 354–367 (VVEEPDEEPEETAE) has biased composition (acidic residues). A compositionally biased stretch (basic and acidic residues) spans 368–399 (DKEQDKDKEMDVGTDEEKQETAKESTAEKDEL).

The protein belongs to the heat shock protein 90 family.

In terms of biological role, putative molecular chaperone. This chain is Putative endoplasmin-like protein (HSP90B2P), found in Homo sapiens (Human).